Here is a 942-residue protein sequence, read N- to C-terminus: Protein translocase subunit SecA (942 aa).

ATP contacts are provided by residues Q90, 108–112, and D509; that span reads GEGKT.

It belongs to the SecA family. Monomer and homodimer. Part of the essential Sec protein translocation apparatus which comprises SecA, SecYEG and auxiliary proteins SecDF. Other proteins may also be involved.

Its subcellular location is the cell inner membrane. The protein resides in the cellular thylakoid membrane. It is found in the cytoplasm. It catalyses the reaction ATP + H2O + cellular proteinSide 1 = ADP + phosphate + cellular proteinSide 2.. Its function is as follows. Part of the Sec protein translocase complex. Interacts with the SecYEG preprotein conducting channel. Has a central role in coupling the hydrolysis of ATP to the transfer of proteins into and across the cell membrane, serving as an ATP-driven molecular motor driving the stepwise translocation of polypeptide chains across the membrane. Functionally, probably participates in protein translocation into and across both the cytoplasmic and thylakoid membranes in cyanobacterial cells. This chain is Protein translocase subunit SecA, found in Prochlorococcus marinus (strain NATL2A).